We begin with the raw amino-acid sequence, 61 residues long: Conotoxin Am14.1 (61 aa).

2 propeptides span residues 1-19 (MLSVQLITPSSHGTAHLPR) and 52-61 (KRDLDLFTDQ).

Mostly non-hydroxylated. In terms of processing, contains 2 disulfide bonds. In terms of tissue distribution, expressed by the venom duct.

The protein localises to the secreted. Probable toxin that inhibits ion channels. This is Conotoxin Am14.1 from Conus amadis (Amadis cone).